We begin with the raw amino-acid sequence, 149 residues long: Myosin, essential light chain (149 aa).

EF-hand domains follow at residues 7–42 and 79–114; these read SMIDEMKDGFPLFDNKGDGKIDGAQLGDVLRSFGLN and GSYEDFFEGLKLFDKEGTGLISGAELRHVLATLGEK.

Myosin is a hexamer of 2 heavy chains and 4 light chains (two regulatory light chains and two essential light chains).

The protein is Myosin, essential light chain of Branchiostoma floridae (Florida lancelet).